Consider the following 23-residue polypeptide: Pseudin-4 (23 aa).

Expressed by the skin glands.

It localises to the secreted. Functionally, possesses antifungal activity against C.albicans and is also active against E.coli and S.aureus. The polypeptide is Pseudin-4 (Pseudis paradoxa (Paradoxical frog)).